We begin with the raw amino-acid sequence, 318 residues long: NADH-ubiquinone oxidoreductase chain 1 (318 aa).

8 helical membrane passes run 2 to 22, 70 to 90, 98 to 118, 140 to 160, 173 to 193, 217 to 237, 253 to 273, and 294 to 314; these read FTIN…FLTL, LYMA…TPLP, FNLG…SILW, ISYG…SGSF, WLLL…LAET, AGSF…MNAL, ELYT…FLWI, and LPLT…LSGI.

Belongs to the complex I subunit 1 family.

Its subcellular location is the mitochondrion inner membrane. It carries out the reaction a ubiquinone + NADH + 5 H(+)(in) = a ubiquinol + NAD(+) + 4 H(+)(out). Its function is as follows. Core subunit of the mitochondrial membrane respiratory chain NADH dehydrogenase (Complex I) that is believed to belong to the minimal assembly required for catalysis. Complex I functions in the transfer of electrons from NADH to the respiratory chain. The immediate electron acceptor for the enzyme is believed to be ubiquinone. The chain is NADH-ubiquinone oxidoreductase chain 1 (MT-ND1) from Sapajus apella (Brown-capped capuchin).